The chain runs to 369 residues: Putative agmatine deiminase (369 aa).

Catalysis depends on Cys355, which acts as the Amidino-cysteine intermediate.

The protein belongs to the agmatine deiminase family.

The catalysed reaction is agmatine + H2O = N-carbamoylputrescine + NH4(+). This is Putative agmatine deiminase from Marinomonas sp. (strain MWYL1).